A 387-amino-acid polypeptide reads, in one-letter code: 3-dehydroquinate synthase (387 aa).

This sequence belongs to the archaeal-type DHQ synthase family.

The catalysed reaction is 2-amino-2,3,7-trideoxy-D-lyxo-hept-6-ulosonate + NAD(+) + H2O = 3-dehydroquinate + NH4(+) + NADH + H(+). Its function is as follows. Catalyzes the oxidative deamination and cyclization of 2-amino-3,7-dideoxy-D-threo-hept-6-ulosonic acid (ADH) to yield 3-dehydroquinate (DHQ), which is fed into the canonical shikimic pathway of aromatic amino acid biosynthesis. In Halobacterium salinarum (strain ATCC 29341 / DSM 671 / R1), this protein is 3-dehydroquinate synthase.